We begin with the raw amino-acid sequence, 182 residues long: UPF0200 protein Mboo_1593 (182 aa).

8–15 (GLPASGKG) contacts ATP.

The protein belongs to the UPF0200 family.

In Methanoregula boonei (strain DSM 21154 / JCM 14090 / 6A8), this protein is UPF0200 protein Mboo_1593.